The chain runs to 436 residues: Bystin (436 aa).

At threonine 145 the chain carries Phosphothreonine. Residues serine 148 and serine 152 each carry the phosphoserine modification.

The protein belongs to the bystin family.

It localises to the nucleus. The protein resides in the nucleolus. In terms of biological role, required for processing of 20S pre-rRNA precursor and biogenesis of 40S ribosomal subunits. This Drosophila melanogaster (Fruit fly) protein is Bystin (bys).